The primary structure comprises 212 residues: Ras-related protein Rab-15 (212 aa).

GTP-binding residues include S17, G18, V19, G20, K21, T22, C23, S35, S39, and T40. Mg(2+) is bound at residue T22. 2 consecutive short sequence motifs (switch) follow at residues 31 to 45 (NEFHSSHISTIGVDF) and 63 to 80 (DTAGQERYQTITKQYYRR). Mg(2+) is bound by residues T40 and D63. 6 residues coordinate GTP: G66, N121, K122, D124, S151, and A152. Positions 192-212 (ELEEDEGKPEGPANSSKTCWC) are disordered. Residues C210 and C212 are each lipidated (S-geranylgeranyl cysteine). C212 is modified (cysteine methyl ester).

This sequence belongs to the small GTPase superfamily. Rab family. In terms of assembly, the GTP bound form of RAB15 interacts with REP15. Interacts (GTP-bound form) with MICAL1, MICAL3, MICALCL, EHBP1 and EHBP1L1. Mg(2+) serves as cofactor.

The protein resides in the cell membrane. The enzyme catalyses GTP + H2O = GDP + phosphate + H(+). With respect to regulation, regulated by guanine nucleotide exchange factors (GEFs) which promote the exchange of bound GDP for free GTP. Regulated by GTPase activating proteins (GAPs) which increase the GTP hydrolysis activity. Inhibited by GDP dissociation inhibitors (GDIs). Functionally, the small GTPases Rab are key regulators of intracellular membrane trafficking, from the formation of transport vesicles to their fusion with membranes. Rabs cycle between an inactive GDP-bound form and an active GTP-bound form that is able to recruit to membranes different sets of downstream effectors directly responsible for vesicle formation, movement, tethering and fusion. RAB15 may act in concert with RAB3A in regulating aspects of synaptic vesicle membrane flow within the nerve terminal. This is Ras-related protein Rab-15 (RAB15) from Bos taurus (Bovine).